The following is a 459-amino-acid chain: Light-independent protochlorophyllide reductase subunit N (459 aa).

Cys22, Cys47, and Cys107 together coordinate [4Fe-4S] cluster.

Belongs to the BchN/ChlN family. In terms of assembly, protochlorophyllide reductase is composed of three subunits; ChlL, ChlN and ChlB. Forms a heterotetramer of two ChlB and two ChlN subunits. The cofactor is [4Fe-4S] cluster.

The protein localises to the plastid. The protein resides in the chloroplast. The enzyme catalyses chlorophyllide a + oxidized 2[4Fe-4S]-[ferredoxin] + 2 ADP + 2 phosphate = protochlorophyllide a + reduced 2[4Fe-4S]-[ferredoxin] + 2 ATP + 2 H2O. It participates in porphyrin-containing compound metabolism; chlorophyll biosynthesis (light-independent). In terms of biological role, component of the dark-operative protochlorophyllide reductase (DPOR) that uses Mg-ATP and reduced ferredoxin to reduce ring D of protochlorophyllide (Pchlide) to form chlorophyllide a (Chlide). This reaction is light-independent. The NB-protein (ChlN-ChlB) is the catalytic component of the complex. The polypeptide is Light-independent protochlorophyllide reductase subunit N (Pinus contorta (Shore pine)).